Consider the following 1404-residue polypeptide: DNA-directed RNA polymerase subunit beta' (1404 aa).

Residues Cys-72, Cys-74, Cys-87, and Cys-90 each contribute to the Zn(2+) site. 3 residues coordinate Mg(2+): Asp-463, Asp-465, and Asp-467. Zn(2+) is bound by residues Cys-811, Cys-885, Cys-892, and Cys-895.

It belongs to the RNA polymerase beta' chain family. As to quaternary structure, the RNAP catalytic core consists of 2 alpha, 1 beta, 1 beta' and 1 omega subunit. When a sigma factor is associated with the core the holoenzyme is formed, which can initiate transcription. It depends on Mg(2+) as a cofactor. Zn(2+) is required as a cofactor.

It carries out the reaction RNA(n) + a ribonucleoside 5'-triphosphate = RNA(n+1) + diphosphate. In terms of biological role, DNA-dependent RNA polymerase catalyzes the transcription of DNA into RNA using the four ribonucleoside triphosphates as substrates. The chain is DNA-directed RNA polymerase subunit beta' from Jannaschia sp. (strain CCS1).